A 126-amino-acid polypeptide reads, in one-letter code: MSNVPADLKYTDEHEWVRTEADGTLTVGITDHAQSTLGDIVFLELPQVGKSVNAGDAVGVVESVKAASDIYSPVSGEVVAINEEATDSPEGVNGDAYGVWLFKLKLADGASTDKLIDAAAYSKLID.

A Lipoyl-binding domain is found at 24-105 (TLTVGITDHA…AYGVWLFKLK (82 aa)). Lys65 carries the N6-lipoyllysine modification.

The protein belongs to the GcvH family. The glycine cleavage system is composed of four proteins: P, T, L and H. Requires (R)-lipoate as cofactor.

In terms of biological role, the glycine cleavage system catalyzes the degradation of glycine. The H protein shuttles the methylamine group of glycine from the P protein to the T protein. The chain is Glycine cleavage system H protein from Burkholderia vietnamiensis (strain G4 / LMG 22486) (Burkholderia cepacia (strain R1808)).